A 600-amino-acid polypeptide reads, in one-letter code: Novobiocin biosynthesis protein H (600 aa).

The segment at 505–526 (GGKTDRAGLPDPVKATQPAGLG) is disordered. The 75-residue stretch at 526 to 600 (GPRTPAEKVL…QLAAIATLEE (75 aa)) folds into the Carrier domain. The residue at position 561 (S561) is an O-(pantetheine 4'-phosphoryl)serine.

The protein belongs to the ATP-dependent AMP-binding enzyme family.

The protein operates within antibiotic biosynthesis; novobiocin biosynthesis. Its function is as follows. Together with NovI, involved in the formation of a beta-OH-Tyr intermediate in the novobiocin biosynthesis pathway, an aminocoumarin family antibiotic that targets bacterial DNA gyrases. The ATP-dependent AMP-binding region activates L-Tyr as L-tyrosyl-AMP and then transfers the L-tyrosyl group to the acyl carrier domain through thioester formation to form a tyrosyl-S intermediate that is covalently tethered to NovH (L-Tyr-S-NovH). The sequence is that of Novobiocin biosynthesis protein H (novH) from Streptomyces niveus (Streptomyces spheroides).